Consider the following 447-residue polypeptide: Tubulin beta-1 chain (447 aa).

Residues Gln-11, Glu-69, Ser-138, Gly-142, Thr-143, Gly-144, Asn-204, and Asn-226 each coordinate GTP. A Mg(2+)-binding site is contributed by Glu-69.

It belongs to the tubulin family. In terms of assembly, dimer of alpha and beta chains. A typical microtubule is a hollow water-filled tube with an outer diameter of 25 nm and an inner diameter of 15 nM. Alpha-beta heterodimers associate head-to-tail to form protofilaments running lengthwise along the microtubule wall with the beta-tubulin subunit facing the microtubule plus end conferring a structural polarity. Microtubules usually have 13 protofilaments but different protofilament numbers can be found in some organisms and specialized cells. Mg(2+) serves as cofactor.

It is found in the cytoplasm. The protein resides in the cytoskeleton. Functionally, tubulin is the major constituent of microtubules, a cylinder consisting of laterally associated linear protofilaments composed of alpha- and beta-tubulin heterodimers. Microtubules grow by the addition of GTP-tubulin dimers to the microtubule end, where a stabilizing cap forms. Below the cap, tubulin dimers are in GDP-bound state, owing to GTPase activity of alpha-tubulin. In Emericella nidulans (strain FGSC A4 / ATCC 38163 / CBS 112.46 / NRRL 194 / M139) (Aspergillus nidulans), this protein is Tubulin beta-1 chain (benA).